The chain runs to 181 residues: ATP-dependent protease subunit HslV (181 aa).

The active site involves Thr-9. Positions 166, 169, and 172 each coordinate Na(+).

Belongs to the peptidase T1B family. HslV subfamily. In terms of assembly, a double ring-shaped homohexamer of HslV is capped on each side by a ring-shaped HslU homohexamer. The assembly of the HslU/HslV complex is dependent on binding of ATP.

The protein resides in the cytoplasm. The enzyme catalyses ATP-dependent cleavage of peptide bonds with broad specificity.. With respect to regulation, allosterically activated by HslU binding. Protease subunit of a proteasome-like degradation complex believed to be a general protein degrading machinery. This Staphylococcus aureus (strain JH1) protein is ATP-dependent protease subunit HslV.